A 167-amino-acid chain; its full sequence is Photosystem I assembly protein Ycf3 (167 aa).

3 TPR repeats span residues 35–68 (AFSY…ETDA), 72–105 (SYIL…NPSL), and 120–153 (GEQA…APTN).

The protein belongs to the Ycf3 family.

It localises to the plastid. Its subcellular location is the chloroplast thylakoid membrane. Essential for the assembly of the photosystem I (PSI) complex. May act as a chaperone-like factor to guide the assembly of the PSI subunits. The protein is Photosystem I assembly protein Ycf3 of Chlorella vulgaris (Green alga).